Reading from the N-terminus, the 324-residue chain is Mitochondrial oxaloacetate transport protein (324 aa).

Solcar repeat units lie at residues 20–111 (ISKF…IRSS), 126–218 (QSVG…AKNI), and 227–312 (DGPA…TMKL). 6 helical membrane passes run 26–46 (FVAGGLAACIAVTVTNPIELI), 79–99 (GIKGLQKGLNAAYIYQIGLNG), 132–152 (VFSGAASGIIGAVIGSPLFLV), 193–213 (GIDAAILRTGAGSSVQLPIYN), 233–253 (LTASTISGLGVAVVMNPWDVI), and 284–305 (LYKGFAAQVFRIAPHTIMCLTF).

Belongs to the mitochondrial carrier (TC 2.A.29) family.

It is found in the mitochondrion inner membrane. It carries out the reaction a dicarboxylate(in) + sulfate(out) = a dicarboxylate(out) + sulfate(in). The catalysed reaction is (2S)-2-isopropylmalate(in) + sulfate(out) = (2S)-2-isopropylmalate(out) + sulfate(in). It catalyses the reaction (2R,3S)-3-isopropylmalate(in) + sulfate(out) = (2R,3S)-3-isopropylmalate(out) + sulfate(in). The enzyme catalyses malonate(in) + sulfate(out) = malonate(out) + sulfate(in). It carries out the reaction oxaloacetate(in) + sulfate(out) = oxaloacetate(out) + sulfate(in). The catalysed reaction is thiosulfate(in) + sulfate(out) = thiosulfate(out) + sulfate(in). Inhibited by alpha-keto isocaproate, an intermediate of leucine biosynthesis pathway. In terms of biological role, antiporter that exchanges dicarboxylates and sulfur oxoanions across the inner membrane of mitochondria. Exports alpha-isopropylmalate from mitochondrial matrix to the cytosol, where it serves as a precursor for leucine biosynthesis. In Saccharomyces cerevisiae (strain ATCC 204508 / S288c) (Baker's yeast), this protein is Mitochondrial oxaloacetate transport protein (OAC1).